The primary structure comprises 511 residues: MTSTPKPLVLIILDGFGHSEVPEHNAIFAANTPVYDRLRATLPHGLISGSGMDVGLPDGQMGNSEVGHMNLGAGRVVYQDFTRVTKAIRDGEFFKNPVLTGAVDKAASAGKAVHILGLLSDGGVHSHQDHLVAMAELAAQRGAEKIYLHAFLDGRDTPPRSAQSSIELLDATFAKLGKGRIASLIGRYYAMDRDNRWDRVSAAYNLIVDSAAEYTADTAQAGLEAAYARDESDEFVKATRIGEAVKVEDGDAVVFMNFRADRARELSRAFVEPDFTEFARARLPKMAAYIGLTQYSAKIPAPAAFAPSSLNNVLGEYLAKNGKTQLRIAETEKYAHVTFFFSGGREEPFEGEERILIPSPKVATYDLQPEMNAPQVTDRIVEAIEQQRFDVIVVNYANGDMVGHTGVFEAAVKAVEALDTCVGRIVDALEKVGGEALITADHGNVEQMEDECTGQAHTAHTTEPVPFIYVGKRNLKVRDGGVLADVAPTMLQLLGLEKPVEMTGTSILVDA.

The Mn(2+) site is built by Asp14 and Ser64. Ser64 acts as the Phosphoserine intermediate in catalysis. Substrate contacts are provided by residues His125, 155-156, Arg187, Arg193, 259-262, and Lys333; these read RD and RADR. Residues Asp400, His404, Asp441, His442, and His460 each coordinate Mn(2+).

This sequence belongs to the BPG-independent phosphoglycerate mutase family. Monomer. The cofactor is Mn(2+).

The catalysed reaction is (2R)-2-phosphoglycerate = (2R)-3-phosphoglycerate. It participates in carbohydrate degradation; glycolysis; pyruvate from D-glyceraldehyde 3-phosphate: step 3/5. Catalyzes the interconversion of 2-phosphoglycerate and 3-phosphoglycerate. The sequence is that of 2,3-bisphosphoglycerate-independent phosphoglycerate mutase from Pseudomonas putida (strain GB-1).